A 29-amino-acid chain; its full sequence is Cyclotide mela-2 (29 aa).

Positions 1-29 form a cross-link, cyclopeptide (Gly-Asp); that stretch reads GKPTCGETCFKGKCYTPGCTCSYPLCKKD. Disulfide bonds link cysteine 5–cysteine 19, cysteine 9–cysteine 21, and cysteine 14–cysteine 26.

This is a cyclic peptide. In terms of processing, contains 3 disulfide bonds.

In terms of biological role, probably participates in a plant defense mechanism (Potential). Binds to and induces leakage in phospholipd membranes, particularly ones containing 1-palmitoyl-2-oleophosphatidylethanolamine (POPE). In vitro, displays cytotoxicity against cultured cells but no hemolytic activity towards fresh erythrocytes. Not active against Gram-negative bacterium E.coli ATCC 25922 or Gram-positive bacterium S.aureus ATCC 25923 up to a concentration of 64 uM. The sequence is that of Cyclotide mela-2 from Melicytus latifolius (Norfolk Island mahoe).